We begin with the raw amino-acid sequence, 321 residues long: Serine protease 52 (321 aa).

Residues 1 to 27 (MKRWKDRRTGLLLPLVLLLFGACSSLA) form the signal peptide. The region spanning 56 to 287 (IVGGKPANIL…YVRWISKQTA (232 aa)) is the Peptidase S1 domain. Residues Cys-81 and Cys-97 are joined by a disulfide bond. Active-site charge relay system residues include His-96 and Asp-142. Residue Asn-153 is glycosylated (N-linked (GlcNAc...) asparagine). Disulfide bonds link Cys-175-Cys-242, Cys-208-Cys-221, and Cys-232-Cys-263. The active-site Charge relay system is the Ser-236. Residues 300–320 (ACPLVLSCRAILFLYFVMFLL) traverse the membrane as a helical segment.

This sequence belongs to the peptidase S1 family.

The protein localises to the membrane. Its function is as follows. Probable serine protease. This Mus musculus (Mouse) protein is Serine protease 52 (Prss52).